The chain runs to 160 residues: Siroheme decarboxylase NirH subunit (160 aa).

The protein belongs to the Ahb/Nir family. In terms of assembly, forms a complex composed of NirDL, NirG and NirH. All proteins are required for the total conversion of siroheme to didecarboxysiroheme.

The enzyme catalyses siroheme + 2 H(+) = 12,18-didecarboxysiroheme + 2 CO2. It participates in porphyrin-containing compound metabolism. Involved in heme d1 biosynthesis. Catalyzes the decarboxylation of siroheme into didecarboxysiroheme. Siroheme is probably decarboxylated to monodecarboxysiroheme, which is in turn decarboxylated to didecarboxysiroheme. The sequence is that of Siroheme decarboxylase NirH subunit from Paracoccus pantotrophus (Thiosphaera pantotropha).